The following is a 300-amino-acid chain: Bifunctional protein FolD (300 aa).

NADP(+)-binding positions include 172-174 (GRS), serine 206, and isoleucine 247.

Belongs to the tetrahydrofolate dehydrogenase/cyclohydrolase family. As to quaternary structure, homodimer.

The catalysed reaction is (6R)-5,10-methylene-5,6,7,8-tetrahydrofolate + NADP(+) = (6R)-5,10-methenyltetrahydrofolate + NADPH. It catalyses the reaction (6R)-5,10-methenyltetrahydrofolate + H2O = (6R)-10-formyltetrahydrofolate + H(+). It functions in the pathway one-carbon metabolism; tetrahydrofolate interconversion. Functionally, catalyzes the oxidation of 5,10-methylenetetrahydrofolate to 5,10-methenyltetrahydrofolate and then the hydrolysis of 5,10-methenyltetrahydrofolate to 10-formyltetrahydrofolate. This Rhodopirellula baltica (strain DSM 10527 / NCIMB 13988 / SH1) protein is Bifunctional protein FolD.